A 321-amino-acid chain; its full sequence is Torsin-2A (321 aa).

A signal peptide spans 1-26; it reads MAAATRGCRPWGSLLGLLGLVSAAAA. 93-100 lines the ATP pocket; it reads GWTGTGKS. A glycan (N-linked (GlcNAc...) asparagine) is linked at Asn149.

Belongs to the ClpA/ClpB family. Torsin subfamily. In terms of assembly, homohexamer. Interacts with TOR1AIP1. In terms of tissue distribution, isoform 1 is expressed ubiquitously, except in cardiac and endothelial tissues.

Its subcellular location is the endoplasmic reticulum lumen. The chain is Torsin-2A (TOR2A) from Homo sapiens (Human).